Here is an 88-residue protein sequence, read N- to C-terminus: Small ribosomal subunit protein bS20 (88 aa).

The segment at 1-21 (MANTTSAKKATRKIARRTAVN) is disordered.

This sequence belongs to the bacterial ribosomal protein bS20 family.

Its function is as follows. Binds directly to 16S ribosomal RNA. The polypeptide is Small ribosomal subunit protein bS20 (Agrobacterium fabrum (strain C58 / ATCC 33970) (Agrobacterium tumefaciens (strain C58))).